A 444-amino-acid polypeptide reads, in one-letter code: Trigger factor (444 aa).

A PPIase FKBP-type domain is found at 160–245 (DMQVTFDFEG…VKQVEKPKLP (86 aa)).

It belongs to the FKBP-type PPIase family. Tig subfamily.

The protein localises to the cytoplasm. It carries out the reaction [protein]-peptidylproline (omega=180) = [protein]-peptidylproline (omega=0). In terms of biological role, involved in protein export. Acts as a chaperone by maintaining the newly synthesized protein in an open conformation. Functions as a peptidyl-prolyl cis-trans isomerase. This chain is Trigger factor, found in Acinetobacter baylyi (strain ATCC 33305 / BD413 / ADP1).